The sequence spans 201 residues: 3-isopropylmalate dehydratase small subunit (201 aa).

It belongs to the LeuD family. LeuD type 1 subfamily. Heterodimer of LeuC and LeuD.

The catalysed reaction is (2R,3S)-3-isopropylmalate = (2S)-2-isopropylmalate. It functions in the pathway amino-acid biosynthesis; L-leucine biosynthesis; L-leucine from 3-methyl-2-oxobutanoate: step 2/4. Its function is as follows. Catalyzes the isomerization between 2-isopropylmalate and 3-isopropylmalate, via the formation of 2-isopropylmaleate. This is 3-isopropylmalate dehydratase small subunit from Sinorhizobium fredii (strain NBRC 101917 / NGR234).